Here is a 260-residue protein sequence, read N- to C-terminus: Archaerhodopsin-1 (260 aa).

The propeptide occupies 1-6; the sequence is MDPIAL. At 7-20 the chain is on the extracellular side; it reads TAAVGADLLGDGRP. The chain crosses the membrane as a helical span at residues 21–42; sequence ETLWLGIGTLLMLIGTFYFIVK. The Cytoplasmic portion of the chain corresponds to 43–51; the sequence is GWGVTDKEA. Residues 52–73 form a helical membrane-spanning segment; the sequence is REYYSITILVPGIASAAYLSMF. The Extracellular segment spans residues 74-91; that stretch reads FGIGLTEVQVGSEMLDIY. Residues 92–113 form a helical membrane-spanning segment; the sequence is YARYADWLFTTPLLLLDLALLA. Residues 114–116 lie on the Cytoplasmic side of the membrane; that stretch reads KVD. Residues 117 to 139 traverse the membrane as a helical segment; it reads RVSIGTLVGVDALMIVTGLVGAL. Topologically, residues 140-143 are extracellular; sequence SHTP. Residues 144–172 traverse the membrane as a helical segment; the sequence is LARYTWWLFSTICMIVVLYFLATSLRAAA. The Cytoplasmic segment spans residues 173-176; the sequence is KERG. Residues 177-204 traverse the membrane as a helical segment; that stretch reads PEVASTFNTLTALVLVLWTAYPILWIIG. Residues 205–212 are Extracellular-facing; sequence TEGAGVVG. The chain crosses the membrane as a helical span at residues 213–245; it reads LGIETLLFMVLDVTAKVGFGFILLRSRAILGDT. At Lys-228 the chain carries N6-(retinylidene)lysine. The Cytoplasmic portion of the chain corresponds to 246–260; sequence EAPEPSAGAEASAAD.

Belongs to the archaeal/bacterial/fungal opsin family.

Its subcellular location is the cell membrane. Light-driven proton pump. It may interact with bacterioruberin in the claret membrane. This chain is Archaerhodopsin-1, found in Halorubrum ezzemoulense (Halorubrum chaoviator).